Consider the following 845-residue polypeptide: Probable inorganic carbon transporter subunit DabA (845 aa).

Residues 1-20 are disordered; it reads MPMASGDESMSARSENPVQS. The Zn(2+) site is built by cysteine 345, aspartate 347, histidine 516, and cysteine 531.

Belongs to the inorganic carbon transporter (TC 9.A.2) DabA family. As to quaternary structure, forms a complex with DabB. Zn(2+) serves as cofactor.

It is found in the cell inner membrane. In terms of biological role, part of an energy-coupled inorganic carbon pump. This Azotobacter vinelandii (strain DJ / ATCC BAA-1303) protein is Probable inorganic carbon transporter subunit DabA.